The primary structure comprises 305 residues: Probable aspartoacylase (305 aa).

Residues H13 and E16 each coordinate Zn(2+). Substrate contacts are provided by residues R55 and 62 to 63 (NR). H105 contacts Zn(2+). Substrate is bound by residues E163 and Y273.

The protein belongs to the AspA/AstE family. Aspartoacylase subfamily. Requires Zn(2+) as cofactor.

It catalyses the reaction an N-acyl-L-aspartate + H2O = a carboxylate + L-aspartate. The chain is Probable aspartoacylase from Prochlorococcus marinus (strain NATL1A).